Here is a 385-residue protein sequence, read N- to C-terminus: Deoxyguanosinetriphosphate triphosphohydrolase-like protein (385 aa).

Residues 75–204 (RLTHSLEVAQ…INFADEIAYN (130 aa)) enclose the HD domain.

Belongs to the dGTPase family. Type 2 subfamily.

The sequence is that of Deoxyguanosinetriphosphate triphosphohydrolase-like protein from Geobacter sulfurreducens (strain ATCC 51573 / DSM 12127 / PCA).